The sequence spans 295 residues: 4-hydroxy-tetrahydrodipicolinate synthase (295 aa).

T47 lines the pyruvate pocket. The Proton donor/acceptor role is filled by Y135. The Schiff-base intermediate with substrate role is filled by K163. I206 lines the pyruvate pocket.

The protein belongs to the DapA family. Homodimer.

It is found in the cytoplasm. It carries out the reaction L-aspartate 4-semialdehyde + pyruvate = (2S,4S)-4-hydroxy-2,3,4,5-tetrahydrodipicolinate + H2O + H(+). The protein operates within amino-acid biosynthesis; L-lysine biosynthesis via DAP pathway; (S)-tetrahydrodipicolinate from L-aspartate: step 3/4. In terms of biological role, catalyzes the condensation of (S)-aspartate-beta-semialdehyde [(S)-ASA] and pyruvate to 4-hydroxy-tetrahydrodipicolinate (HTPA). This is 4-hydroxy-tetrahydrodipicolinate synthase from Staphylococcus saprophyticus subsp. saprophyticus (strain ATCC 15305 / DSM 20229 / NCIMB 8711 / NCTC 7292 / S-41).